Here is a 352-residue protein sequence, read N- to C-terminus: Dysbindin (352 aa).

Residue Ser11 is modified to Phosphoserine. A coiled-coil region spans residues 92–180 (TSLAELQEQL…AELDTEHAQK (89 aa)). Positions 243 to 256 (LMDLSDQEALDVFL) match the Nuclear export signal motif. The disordered stretch occupies residues 267-352 (SPGLEMESNP…SDQCDSTQDI (86 aa)). A compositionally biased stretch (polar residues) spans 274–285 (SNPSQNEMNLQI). The segment covering 286-301 (PNPSESASQPPASPSA) has biased composition (low complexity). A phosphoserine mark is found at Ser340 and Ser343.

The protein belongs to the dysbindin family. Interacts (via its coiled coil domain) with KXD1. Interacts with AP3B2, TRIM32, CMYA5, PI4K2 and RNF151. Interacts with the DNA-dependent protein kinase complex DNA-PK; the interaction phosphorylates DTNBP1 in vitro. Interacts directly in this complex with XRCC5 and XRCC6. Interacts with XPO1; the interaction exports DTNBP1 out of the nucleus. Component of the biogenesis of lysosome-related organelles complex 1 (BLOC-1) composed of at least BLOC1S1, BLOC1S2, BLOC1S3, BLOC1S4, BLOC1S5, BLOC1S6, DTNBP1/BLOC1S7 and SNAPIN/BLOC1S8. Interacts directly in the complex with BLOC1S5, BLOC1S6 and SNAPIN/BLOC1S8. The BLOC-1 complex associates with the AP-3 protein complex and membrane protein cargos. This BLOC-1 complex also associates with the BLOC-2 complex in endosomes. Binds to DTNA and DTNB but may not be a physiological binding partner. Interacts with AP3M1. Post-translationally, ubiquitinated by TRIM32. Ubiquitination leads to DTNBP1 degradation. In terms of tissue distribution, detected in hippocampus neurons (at protein level). Ubiquitously expressed. The highest expression is observed in testis, liver, kidney, brain, heart and lung. In the brain, found primarily in axon bundles and axon terminals, notably in the cerebellum and hippocampus. Expressed at lower levels in stomach, small intestine and skeletal muscle, where it is detected at the sarcolemma.

The protein resides in the cytoplasm. The protein localises to the cytoplasmic vesicle membrane. Its subcellular location is the cytoplasmic vesicle. It localises to the secretory vesicle. It is found in the synaptic vesicle membrane. The protein resides in the endosome membrane. The protein localises to the melanosome membrane. Its subcellular location is the nucleus. It localises to the postsynaptic density. It is found in the presynaptic cell membrane. The protein resides in the endoplasmic reticulum. Functionally, component of the BLOC-1 complex, a complex that is required for normal biogenesis of lysosome-related organelles (LRO), such as platelet dense granules and melanosomes. In concert with the AP-3 complex, the BLOC-1 complex is required to target membrane protein cargos into vesicles assembled at cell bodies for delivery into neurites and nerve terminals. The BLOC-1 complex, in association with SNARE proteins, is also proposed to be involved in neurite extension. Associates with the BLOC-2 complex to facilitate the transport of TYRP1 independent of AP-3 function. Plays a role in synaptic vesicle trafficking and in neurotransmitter release. Plays a role in the regulation of cell surface exposure of DRD2. May play a role in actin cytoskeleton reorganization and neurite outgrowth. May modulate MAPK8 phosphorylation. Appears to promote neuronal transmission and viability through regulating the expression of SNAP25 and SYN1, modulating PI3-kinase-Akt signaling and influencing glutamatergic release. Regulates the expression of SYN1 through binding to its promoter. Modulates prefrontal cortical activity via the dopamine/D2 pathway. The protein is Dysbindin (Dtnbp1) of Rattus norvegicus (Rat).